A 188-amino-acid chain; its full sequence is MSRLRIFDDHTPDTPFFVSKEQAQITAELHKIGITFERWEATQAIEPGATAEQVMAAYRTDIDRLIATHGFKTVDVISIAPDNAKREEMRAKFLEEHFHKEDEVRFFVAGSGLFTVHSGNKVYEIECVKNDLIAIPDGTLHWFDMGAAPYFVAIRFFTEPDGWVGHFTGTDIAQRFPRYIPEGCQSAH.

His-97, His-99, Glu-103, and His-141 together coordinate Fe(2+). His-97, His-99, Glu-103, and His-141 together coordinate Ni(2+).

This sequence belongs to the acireductone dioxygenase (ARD) family. Monomer. Requires Fe(2+) as cofactor. Ni(2+) is required as a cofactor.

It catalyses the reaction 1,2-dihydroxy-5-(methylsulfanyl)pent-1-en-3-one + O2 = 3-(methylsulfanyl)propanoate + CO + formate + 2 H(+). The enzyme catalyses 1,2-dihydroxy-5-(methylsulfanyl)pent-1-en-3-one + O2 = 4-methylsulfanyl-2-oxobutanoate + formate + 2 H(+). Its pathway is amino-acid biosynthesis; L-methionine biosynthesis via salvage pathway; L-methionine from S-methyl-5-thio-alpha-D-ribose 1-phosphate: step 5/6. In terms of biological role, catalyzes 2 different reactions between oxygen and the acireductone 1,2-dihydroxy-3-keto-5-methylthiopentene (DHK-MTPene) depending upon the metal bound in the active site. Fe-containing acireductone dioxygenase (Fe-ARD) produces formate and 2-keto-4-methylthiobutyrate (KMTB), the alpha-ketoacid precursor of methionine in the methionine recycle pathway. Ni-containing acireductone dioxygenase (Ni-ARD) produces methylthiopropionate, carbon monoxide and formate, and does not lie on the methionine recycle pathway. This Xylella fastidiosa (strain M23) protein is Acireductone dioxygenase.